The primary structure comprises 212 residues: Glutathione S-transferase (212 aa).

Positions 1-82 constitute a GST N-terminal domain; the sequence is MGMKLHGPAM…YIAHTYADKG (82 aa). Glutathione-binding positions include Ser11, 12–13, 40–41, 53–54, and 66–67; these read PA, HK, QV, and ES. The region spanning 89–212 is the GST C-terminal domain; it reads DPKKMAIMSV…AWSKAIEYKQ (124 aa).

This sequence belongs to the GST superfamily. Phi family.

The enzyme catalyses RX + glutathione = an S-substituted glutathione + a halide anion + H(+). Its function is as follows. Conjugation of reduced glutathione to a wide number of exogenous and endogenous hydrophobic electrophiles. This chain is Glutathione S-transferase, found in Hyoscyamus muticus (Egyptian henbane).